Here is a 336-residue protein sequence, read N- to C-terminus: F420-dependent glucose-6-phosphate dehydrogenase (336 aa).

Aspartate 39 is a binding site for coenzyme F420-(gamma-Glu)n. Histidine 40 acts as the Proton donor in catalysis. Residues threonine 76 and 107–108 each bind coenzyme F420-(gamma-Glu)n; that span reads SG. Catalysis depends on glutamate 109, which acts as the Proton acceptor. Coenzyme F420-(gamma-Glu)n contacts are provided by residues asparagine 112, 177 to 178, and 180 to 181; these read GG and VV. Residues threonine 195, lysine 198, lysine 259, and arginine 283 each coordinate substrate.

This sequence belongs to the F420-dependent glucose-6-phosphate dehydrogenase family. As to quaternary structure, homodimer.

The enzyme catalyses oxidized coenzyme F420-(gamma-L-Glu)(n) + D-glucose 6-phosphate + H(+) = 6-phospho-D-glucono-1,5-lactone + reduced coenzyme F420-(gamma-L-Glu)(n). Catalyzes the coenzyme F420-dependent oxidation of glucose 6-phosphate (G6P) to 6-phosphogluconolactone. In Tsukamurella paurometabola (strain ATCC 8368 / DSM 20162 / CCUG 35730 / CIP 100753 / JCM 10117 / KCTC 9821 / NBRC 16120 / NCIMB 702349 / NCTC 13040) (Corynebacterium paurometabolum), this protein is F420-dependent glucose-6-phosphate dehydrogenase.